Here is a 72-residue protein sequence, read N- to C-terminus: High-potential iron-sulfur protein isozyme 1 (72 aa).

Cysteine 34, cysteine 37, cysteine 51, and cysteine 65 together coordinate [4Fe-4S] cluster.

It belongs to the high-potential iron-sulfur protein (HiPIP) family. In terms of assembly, homodimer.

Specific class of high-redox-potential 4Fe-4S ferredoxins. Functions in anaerobic electron transport in most purple and in some other photosynthetic bacteria and in at least one genus (Paracoccus) of halophilic, denitrifying bacteria. In Ectothiorhodospira shaposhnikovii (Ectothiorhodospira vacuolata), this protein is High-potential iron-sulfur protein isozyme 1 (hip1).